The primary structure comprises 368 residues: Quinolinate synthase (368 aa).

Positions 46 and 63 each coordinate iminosuccinate. Cys-110 is a binding site for [4Fe-4S] cluster. Residues 141–143 and Ser-162 each bind iminosuccinate; that span reads YVN. Residue Cys-230 coordinates [4Fe-4S] cluster. Residues 256–258 and Thr-273 contribute to the iminosuccinate site; that span reads HPE. Cys-320 serves as a coordination point for [4Fe-4S] cluster.

Belongs to the quinolinate synthase family. Type 3 subfamily. Requires [4Fe-4S] cluster as cofactor.

It is found in the cytoplasm. The catalysed reaction is iminosuccinate + dihydroxyacetone phosphate = quinolinate + phosphate + 2 H2O + H(+). It functions in the pathway cofactor biosynthesis; NAD(+) biosynthesis; quinolinate from iminoaspartate: step 1/1. Its function is as follows. Catalyzes the condensation of iminoaspartate with dihydroxyacetone phosphate to form quinolinate. The polypeptide is Quinolinate synthase (Bacillus anthracis (strain A0248)).